The chain runs to 603 residues: MANMTPRKNSVTRLIAPVALALTLAACSSSPKAPDRLDITQSPTETSNAYILKADQQQGALEADFLIMALKAAVQEQNFDLADKLFTRLATMQLSPAQTAEMQLAHAKMLKSQSQYEDALKTLNFEAWWKLENSQWVEYHKLRHELYLLSGDNLNSARELIELEPFTAEDQKAQLWTQVWTSVSSLNSTALEEVKLDETETNLHGWVQLATYLDTLKHSPMRLQETLNEWLLANPTHPAATYTPQVILDILALEIVRPENVALLLPLSGRFGPQGIRVRDGFINAMMEDKERDEFTKLKVIDTQATSMAEIMTTLEKEQIQFVVGPLVRSKIEEFQSLNSTEIAQLALNIPSEIDTDINSCYFTLSPEQEAEQAAVHLFKQGFKHPLYLAPQGTMGERLSQAFSDKWFQLTAKRPSISYFGSKAQLQQKVNSVFGIESSQARIYQMNALASMELEAQPRSRRDIDAVYMVAKSSELVLLKPFIEVAINPGIKPPKLYASSRSNSGRQTQLVEIKGIEFSDIPLLTNENHSFKAQYDELWPKSSNGETRLHALGMDAYQLVAELPQMKAVDNYRMEGKTGELSLNQECVIQRKMSWAVHGEETE.

The first 26 residues, 1-26 (MANMTPRKNSVTRLIAPVALALTLAA), serve as a signal peptide directing secretion. Residue C27 is the site of N-palmitoyl cysteine attachment. A lipid anchor (S-diacylglycerol cysteine) is attached at C27.

This sequence belongs to the LpoA family. Interacts with PBP1a.

Its subcellular location is the cell outer membrane. In terms of biological role, regulator of peptidoglycan synthesis that is essential for the function of penicillin-binding protein 1A (PBP1a). The chain is Penicillin-binding protein activator LpoA from Aliivibrio fischeri (strain ATCC 700601 / ES114) (Vibrio fischeri).